Consider the following 1912-residue polypeptide: Receptor-type tyrosine-protein phosphatase delta (1912 aa).

Positions 1-20 (MVPVARPLSLLLTFFLCACA) are cleaved as a signal peptide. The Extracellular portion of the chain corresponds to 21–1266 (ETPPRFTRTP…PQPITDEEEG (1246 aa)). Ig-like C2-type domains lie at 24–114 (PRFT…TRLT) and 126–224 (PTID…ANLY). Intrachain disulfides connect C45–C98 and C147–C207. Positions 181–189 (ESIGGTPIR) are mini-exon peptide A9; sufficient for interaction with IL1RAPL1. Residues 227-230 (ELRE) are mini-exon peptide B; required for interaction with SLITRK2 and in the function in pre-synaptic differentiation; Acts as an adjustable linker to control relative positions and orientations of the PTPRD second and third immunoglobilin domains for their simultaneous interactions with the first immunoglobilin domain of IL1RAPL1 and IL1RAP; Modulates affinity for IL1RAPL1 and IL1RAP. One can recognise an Ig-like C2-type 3 domain in the interval 236–318 (PRFSIPPTNH…GVIEAIAQIT (83 aa)). N254 and N299 each carry an N-linked (GlcNAc...) asparagine glycan. A disulfide bridge links C257 with C302. 8 Fibronectin type-III domains span residues 325–415 (PPGT…TSEQ), 420–516 (APRD…TGVP), 518–607 (QPLN…TMQS), 612–709 (PPQD…TDED), 714–822 (PPRK…TTGA), 823–916 (VPGK…VPEE), 921–1016 (FPQN…TLPV), and 1020–1106 (FAKN…TAPD). N724 and N832 each carry an N-linked (GlcNAc...) asparagine glycan. A helical transmembrane segment spans residues 1267-1287 (LIWVVGPVLAVVFIICIVIAI). The Cytoplasmic segment spans residues 1288 to 1912 (LLYKRKRAES…YLGSFDHYAT (625 aa)). Positions 1298-1319 (ESRKSSLPNSKEVPSHHPTDPV) are disordered. The span at 1310–1319 (VPSHHPTDPV) shows a compositional bias: basic and acidic residues. 2 Tyrosine-protein phosphatase domains span residues 1357–1612 (FSQE…LLEA) and 1644–1903 (MELE…ALEY). Residues D1521, 1553–1559 (CSAGVGR), and Q1597 contribute to the substrate site. C1553 (phosphocysteine intermediate) is an active-site residue. Residue C1844 is the Phosphocysteine intermediate of the active site.

It belongs to the protein-tyrosine phosphatase family. Receptor class 2A subfamily. In terms of assembly, interacts with PPFIA1, PPFIA2 and PPFIA3. Interacts (via extracellular domain) with SLITRK4 (via LRR 1 and 2 repeats). Interacts with SLITRK2; induces presynaptic differentiation. Interacts (via the second immunoglobilin domain) with IL1RAPL1 (via the first immunoglobilin domain); induces pre- and postsynaptic differentiation of neurons and synapse formation. Isoform G, isoform H, isoform I, isoform J, and isoform K do not interact with IL1RAPL1. Interacts (via the third immunoglobilin domain) with IL1RAP (via the first immunoglobilin domain); induces pre- and postsynaptic differentiation of neurons. A cleavage occurs, separating the extracellular domain from the transmembrane segment. This process called 'ectodomain shedding' is thought to be involved in receptor desensitization, signal transduction and/or membrane localization. Brain, kidney, heart, and some B-cell lines.

The protein resides in the membrane. The catalysed reaction is O-phospho-L-tyrosyl-[protein] + H2O = L-tyrosyl-[protein] + phosphate. Can bidirectionally induce pre- and post-synaptic differentiation of neurons by mediating interaction with IL1RAP and IL1RAPL1 trans-synaptically. Involved in pre-synaptic differentiation through interaction with SLITRK2. The chain is Receptor-type tyrosine-protein phosphatase delta (Ptprd) from Mus musculus (Mouse).